A 70-amino-acid polypeptide reads, in one-letter code: Small ribosomal subunit protein bS21 (70 aa).

Belongs to the bacterial ribosomal protein bS21 family.

The protein is Small ribosomal subunit protein bS21 of Albidiferax ferrireducens (strain ATCC BAA-621 / DSM 15236 / T118) (Rhodoferax ferrireducens).